The following is an 898-amino-acid chain: Transportin-1 (898 aa).

Met-1 carries the post-translational modification N-acetylmethionine. HEAT repeat units follow at residues 19–46 (GLQQ…QKLE), 51–89 (YPDF…AHFQ), 98–131 (FIKS…KGEL), 137–174 (LLPK…LDSD), 181–211 (NIMI…QFII), 224–251 (FIEN…VMLL), 263–290 (HNIV…FWLT), 306–397 (PKLI…LANV), 405–433 (HILP…GAIA), 445–472 (PELI…TLSR), 486–519 (LKPL…EEEA), 527–560 (LAYI…ADSV), 568–606 (EYIQ…TALQ), 614–665 (EPVY…GLGG), 676–707 (ILTL…KACF), 715–748 (ADFM…IQMG), 756–791 (PMVL…YVCP), 799–832 (QQFI…ISVN), 841–872 (IFFC…KNQV), and 875–895 (ENWR…LAAF). One can recognise an Importin N-terminal domain in the interval 41-109 (VQQKLEQLNQ…KSECLNNIGD (69 aa)). The interval 347-374 (FHRSRTVAQQHDEDGIEEEDDDDDEIDD) is disordered. Residues 360–374 (DGIEEEDDDDDEIDD) show a composition bias toward acidic residues.

Belongs to the importin beta family. Importin beta-2 subfamily. Identified in a complex that contains TNPO1, RAN and RANBP1. Binds HNRPA1, HNRPA2, HNRNPDL, RPS7, RPL5 and RAN. Interacts with H2A, H2B, H3 and H4 histones. Interacts with isoform 1 and isoform 5 of ADAR/ADAR1 (via DRBM 3 domain). Interacts with SNAI1 (via zinc fingers); the interaction mediates SNAI1 nuclear import. Interacts with SNAI2 (via zinc fingers). Interacts with RPL23A (via BIB domain) and SRP19; this interaction is involved in RPL23A and SRP19 import into the nucleus. Interacts (via HEAT repeats 8-12) with BAP1 (via non-classical PY-NLS); this interaction is direct, is involved in BAP1 nuclear import and disrupts BAP1 homodimerization. In terms of assembly, (Microbial infection) Binds to HIV-1 Rev.

It localises to the cytoplasm. The protein resides in the nucleus. Its function is as follows. Functions in nuclear protein import as nuclear transport receptor. Serves as receptor for nuclear localization signals (NLS) in cargo substrates. May mediate docking of the importin/substrate complex to the nuclear pore complex (NPC) through binding to nucleoporin and the complex is subsequently translocated through the pore by an energy requiring, Ran-dependent mechanism. At the nucleoplasmic side of the NPC, Ran binds to the importin, the importin/substrate complex dissociates and importin is re-exported from the nucleus to the cytoplasm where GTP hydrolysis releases Ran. The directionality of nuclear import is thought to be conferred by an asymmetric distribution of the GTP- and GDP-bound forms of Ran between the cytoplasm and nucleus. Involved in nuclear import of M9-containing proteins. In vitro, binds directly to the M9 region of the heterogeneous nuclear ribonucleoproteins (hnRNP), A1 and A2 and mediates their nuclear import. Involved in hnRNP A1/A2 nuclear export. Mediates the nuclear import of ribosomal proteins RPL23A, RPS7 and RPL5. In vitro, mediates nuclear import of H2A, H2B, H3 and H4 histones. In vitro, mediates nuclear import of SRP19. Mediates nuclear import of ADAR/ADAR1 isoform 1 and isoform 5 in a RanGTP-dependent manner. Main mediator of PR-DUB complex component BAP1 nuclear import; acts redundantly with the karyopherins KPNA1 and KPNA2. Functionally, (Microbial infection) In case of HIV-1 infection, binds and mediates the nuclear import of HIV-1 Rev. The sequence is that of Transportin-1 (TNPO1) from Homo sapiens (Human).